A 233-amino-acid polypeptide reads, in one-letter code: Delta-actitoxin-Amc1a (233 aa).

The signal sequence occupies residues 1–18 (MKRIFIVALLFATCLVNA). 2 consecutive propeptides follow at residues 19–29 (KPSINDADIKR) and 30–33 (EPEP). The residue at position 39 (proline 39) is a Hydroxyproline. Intrachain disulfides connect cysteine 40–cysteine 51 and cysteine 43–cysteine 58. 2 propeptides span residues 61–63 (RKR) and 64–67 (EPEP). Proline 73 is subject to Hydroxyproline. 2 disulfide bridges follow: cysteine 74-cysteine 85 and cysteine 77-cysteine 92. 2 consecutive propeptides follow at residues 95 to 97 (RKR) and 98 to 101 (EPEP). Proline 107 carries the post-translational modification Hydroxyproline. Cystine bridges form between cysteine 108-cysteine 119 and cysteine 111-cysteine 126. Propeptides lie at residues 129-131 (RKR) and 132-135 (EPEP). Proline 141 bears the Hydroxyproline mark. Cystine bridges form between cysteine 142–cysteine 153 and cysteine 145–cysteine 160. 2 propeptides span residues 163-165 (RKR) and 166-169 (EPEP). Proline 175 carries the hydroxyproline modification. Disulfide bonds link cysteine 176-cysteine 187 and cysteine 179-cysteine 194. 2 propeptides span residues 197–199 (RKR) and 200–203 (EPEP). Proline 209 is subject to Hydroxyproline. 2 disulfides stabilise this stretch: cysteine 210–cysteine 221 and cysteine 213–cysteine 228. The propeptide occupies 231–233 (RKR).

This sequence belongs to the sea anemone BBH family. Post-translationally, each Am I peptide may contain 2 disulfide bonds. The precursor protein seems to be processed in the following sequence: release of the signal peptide and of the propeptide, production of six identical 34-residue peptides by cleavage between Arg and Glu, release of four N-terminal and three C-terminal residues from each peptide and hydroxylation of each Pro in position 6 of the resulting 27-residue peptides.

It is found in the secreted. Its subcellular location is the nematocyst. Functionally, may inhibit voltage-gated sodium channels (Nav). In Antheopsis maculata (Sea anemone), this protein is Delta-actitoxin-Amc1a.